A 78-amino-acid polypeptide reads, in one-letter code: Acyl carrier protein (78 aa).

Positions 4–78 constitute a Carrier domain; sequence AEIKDKVYDI…QQAIDYIVKK (75 aa). Position 39 is an O-(pantetheine 4'-phosphoryl)serine (Ser39).

It belongs to the acyl carrier protein (ACP) family. 4'-phosphopantetheine is transferred from CoA to a specific serine of apo-ACP by AcpS. This modification is essential for activity because fatty acids are bound in thioester linkage to the sulfhydryl of the prosthetic group.

It localises to the cytoplasm. It functions in the pathway lipid metabolism; fatty acid biosynthesis. Its function is as follows. Carrier of the growing fatty acid chain in fatty acid biosynthesis. This Chlorobium phaeovibrioides (strain DSM 265 / 1930) (Prosthecochloris vibrioformis (strain DSM 265)) protein is Acyl carrier protein.